A 110-amino-acid chain; its full sequence is MKNWIFLAVSIFGEVIATSALKSSHGFTRLVPSVVVVAGYGLAFYFLSLALKSIPVGIAYAVWAGLGIVLVAAIAWIFHGQKLDFWAFIGMGLIVSGVAVLNLLSKVSAH.

4 consecutive transmembrane segments (helical) span residues 1-21 (MKNW…TSAL), 31-51 (VPSV…SLAL), 58-78 (IAYA…AWIF), and 85-105 (FWAF…NLLS).

It belongs to the drug/metabolite transporter (DMT) superfamily. Small multidrug resistance (SMR) (TC 2.A.7.1) family.

The protein resides in the cell membrane. Its function is as follows. Multidrug exporter. Is implicated for the resistance to bacteriocidal quaternary ammonium compounds. This chain is Quaternary ammonium compound-resistance protein QacF (qacF), found in Klebsiella aerogenes (Enterobacter aerogenes).